A 1055-amino-acid chain; its full sequence is MDS1 and EVI1 complex locus protein EVI1-A (1055 aa).

C2H2-type zinc fingers lie at residues 21–48, 75–97, and 103–125; these read YRCE…VTPH, HECK…LLSH, and YKCD…QMSH. The C2H2-type 4; degenerate zinc-finger motif lies at 131–155; it reads YECENCSKQVFTDPSNLQRHIRSQH. C2H2-type zinc fingers lie at residues 161–183 and 189–211; these read HACS…KHIH and FVCE…KRMH. The segment at 218–240 adopts a C2H2-type 7; atypical zinc-finger fold; it reads IKCKDCGQMFSTTSSLNKHRRFC. Disordered regions lie at residues 324 to 345, 372 to 423, and 531 to 621; these read PVKG…VNQP, FITE…SDKD, and VPLK…PELP. Over residues 332–345 the composition is skewed to polar residues; sequence EQSSKSQSPHVNQP. A compositionally biased stretch (basic and acidic residues) spans 381 to 392; the sequence is RPHEKISDHSES. Positions 399–413 are enriched in polar residues; it reads STPSGSDLETTSGSD. The short motif at 422-435 is the Nuclear localization signal element; sequence KDKLKENGKLYKDK. Residues 531–566 are compositionally biased toward basic and acidic residues; that stretch reads VPLKIEPESPKETKKVQKGKTESPFDLTTKRKEEKA. Residues 554 to 558 carry the CTBP-binding motif 1 motif; the sequence is PFDLT. Positions 569 to 583 are enriched in polar residues; the sequence is NVPSKSGAPTSSNHD. The short motif at 585 to 589 is the CTBP-binding motif 2 element; the sequence is PLDLS. A compositionally biased stretch (polar residues) spans 591-601; that stretch reads GSRSRAATTKQ. Residues 602–621 show a composition bias toward basic and acidic residues; that stretch reads TEPRKNHIFNEKKDMDPELP. C2H2-type zinc fingers lie at residues 734 to 756, 762 to 785, and 791 to 813; these read YTCR…LRTH, YRCK…RNIH, and FKCH…LKKH. Disordered regions lie at residues 813 to 837 and 922 to 957; these read HENG…GPIL and SVDE…EDFK. A compositionally biased stretch (polar residues) spans 816–827; it reads GNLSGTAASSPH. Positions 944 to 954 are enriched in acidic residues; sequence DDEDDDDDEEE.

As to quaternary structure, homooligomer. Interacts with ctbp. In terms of tissue distribution, expressed dynamically during embryonic development; in the developing pronephros, specific areas of the brain (forebrain, midbrain and hindbrain), and in the majority of the visceral arch, and head mesenchyme derived from neural crest cells. Within the pronephros, expressed in the ventroposterior region of the pronephros anlagen from stage 20 (and is absent from the splanchnic layer that forms the glomus), then expression becomes restricted to the distal tubule and duct by the tadpole stage. In adults, expressed in various tissues including kidney, lung, testis, spleen and stomach.

It localises to the nucleus. It is found in the nucleus speckle. In terms of biological role, transcriptional repressor during pronephros development. Plays a role in regionalization of the pronephros; may promote formation of the distal tubule and duct over formation of the glomus and proximal tubule. This chain is MDS1 and EVI1 complex locus protein EVI1-A (mecom-a), found in Xenopus laevis (African clawed frog).